A 180-amino-acid chain; its full sequence is Insertion element IS1296 uncharacterized 21.4 kDa protein (180 aa).

This sequence belongs to the IS150/IS1296 orfA family.

This chain is Insertion element IS1296 uncharacterized 21.4 kDa protein, found in Mycoplasma mycoides subsp. mycoides SC.